The primary structure comprises 309 residues: General transcription factor IIH subunit 3 (309 aa).

The segment at 269–286 adopts a C4-type zinc-finger fold; the sequence is CSVCLSIFCNFSPICTTC.

It belongs to the TFB4 family. Part of a TFIID-containing RNA polymerase II pre-initiation complex that is composed of TBP and at least GTF2A1, GTF2A2, GTF2E1, GTF2E2, GTF2F1, GTF2H2, GTF2H3, GTF2H4, GTF2H5, GTF2B, TCEA1, ERCC2, ERCC3, TAF1, TAF2, TAF3, TAF4, TAF5, TAF6, TAF7, TAF8, TAF9, TAF10, TAF11, TAF12 and TAF13. Component of the 7-subunit TFIIH core complex composed of XPB/ERCC3, XPD/ERCC2, GTF2H1, GTF2H2, GTF2H3, GTF2H4 and GTF2H5, which is active in NER. The core complex associates with the 3-subunit CDK-activating kinase (CAK) module composed of CCNH/cyclin H, CDK7 and MNAT1 to form the 10-subunit holoenzyme (holo-TFIIH) active in transcription. Interacts with RARA; the interaction requires prior phosphorylation of RARA on 'Ser-369' which then enhances interaction of RARA with CDK7.

Its subcellular location is the nucleus. Component of the general transcription and DNA repair factor IIH (TFIIH) core complex, which is involved in general and transcription-coupled nucleotide excision repair (NER) of damaged DNA and, when complexed to CAK, in RNA transcription by RNA polymerase II. In NER, TFIIH acts by opening DNA around the lesion to allow the excision of the damaged oligonucleotide and its replacement by a new DNA fragment. In transcription, TFIIH has an essential role in transcription initiation. When the pre-initiation complex (PIC) has been established, TFIIH is required for promoter opening and promoter escape. Phosphorylation of the C-terminal tail (CTD) of the largest subunit of RNA polymerase II by the kinase module CAK controls the initiation of transcription. This is General transcription factor IIH subunit 3 (Gtf2h3) from Rattus norvegicus (Rat).